A 304-amino-acid chain; its full sequence is MMNNLDDNFDAILITGPTASGKSALALRLAAEVGGVVINADSMQVYDTLRVVTARPSEEDMQAVPHHLYGHVVAGAAYSTGDWLRDVAVLLQDLQAQNRLPVIVGGTGLYFKALTGGLSDMPAIPEAVRVMLRQRERVEGAESLHRDLTLRDPTVAARLDPRDGQRIIRALEVLEVTGQSISVFQTRSGPMIIDPQRARKLVVLPDRKLLHDRINRRFAMMMDEGAVEEVEALLAQNLSLDMPAMKAIGVSQIAAMLKGEISREDVIEKSSAATRQYAKRQMTWFRNQMNETWERVDPAANRSG.

ATP is bound at residue 16–23 (GPTASGKS). Residue 18-23 (TASGKS) participates in substrate binding. Interaction with substrate tRNA stretches follow at residues 41-44 (DSMQ) and 165-169 (QRIIR).

Belongs to the IPP transferase family. As to quaternary structure, monomer. It depends on Mg(2+) as a cofactor.

The catalysed reaction is adenosine(37) in tRNA + dimethylallyl diphosphate = N(6)-dimethylallyladenosine(37) in tRNA + diphosphate. Catalyzes the transfer of a dimethylallyl group onto the adenine at position 37 in tRNAs that read codons beginning with uridine, leading to the formation of N6-(dimethylallyl)adenosine (i(6)A). The sequence is that of tRNA dimethylallyltransferase from Allorhizobium ampelinum (strain ATCC BAA-846 / DSM 112012 / S4) (Agrobacterium vitis (strain S4)).